A 286-amino-acid chain; its full sequence is Ribose-5-phosphate isomerase (286 aa).

Belongs to the ribose 5-phosphate isomerase family.

It is found in the cytoplasm. It carries out the reaction aldehydo-D-ribose 5-phosphate = D-ribulose 5-phosphate. It functions in the pathway carbohydrate degradation; pentose phosphate pathway; D-ribose 5-phosphate from D-ribulose 5-phosphate (non-oxidative stage): step 1/1. The protein is Ribose-5-phosphate isomerase (RKI1) of Mycosarcoma maydis (Corn smut fungus).